The following is a 267-amino-acid chain: Elsinochrome reductase 1 (267 aa).

Residues I26, D72, N99, and R132 each coordinate NADP(+). S149 functions as the Proton donor in the catalytic mechanism. 4 residues coordinate NADP(+): Y163, K167, I196, and T198. The active-site Proton acceptor is Y163. The active-site Lowers pKa of active site Tyr is the K167.

It belongs to the short-chain dehydrogenases/reductases (SDR) family.

Functionally, reductase; part of the gene cluster that mediates the biosynthesis of elsinochromes, pigments consisting of at least four interconvertible tautomers (A, B, C and D) that have a core phenolic quinone to which various side chains are attached and which play an important role in fungal pathogenesis. The non-reducing polyketide synthase PKS1 was proposed to iteratively catalyze decarboxylation between acetyl-CoA and malonyl-CoA subunits for polyketide chain elongation. The released polyketide undergoes cyclization to form an aromatic ring, and proceeds via serial modification steps to produce the heptaketide back- bone of elsinochrome. As elsinochrome has a symmetrical structure, two identical heptaketides are fused to form a core 1,2-dihydrobenzo-perylene ring structure, which can then be successively modified to produce the various derivatives of elsinochrome. Some of these reactions may be cooperatively carried out, at least in part, by the products of RDT1, OXR1 and PKS1. PRF1, embedded within the elsinochrome cluster possibly functions to stabilize some of the biosynthetic enzymes required for elsinochrome production. As prefoldin is a hexamer containing 2 a and 4 b subunits, additional prefoldin subunits, whose coding genes may not immediately link to the elsinochrome biosynthetic gene cluster, are required to fulfill the chaperone function. In addition, no methyltransferase-coding gene exists within the biosynthetic gene cluster, even though elsinochrome has four methyl groups at positions C3, C7, C8 and C12. Apparently, the identified gene cluster does not contain the entire entourage of genes responsible for elsinochrome biosynthesis. Once elsinochrome is synthesized, it must be exported outside the fungal cells, which is probably accomplished by the ECT1 transporter, to avoid toxicity. This is Elsinochrome reductase 1 from Elsinoe fawcettii (Citrus scab fungus).